Consider the following 159-residue polypeptide: Ribonuclease H (159 aa).

In terms of domain architecture, RNase H type-1 spans 1–142 (MHKQVEIFTD…CDELAKAAAQ (142 aa)). Aspartate 10, glutamate 48, aspartate 70, and aspartate 134 together coordinate Mg(2+). The segment at 135–159 (ELAKAAAQSPTKEDTGYLESQQDKT) is disordered. A compositionally biased stretch (basic and acidic residues) spans 145–159 (TKEDTGYLESQQDKT).

The protein belongs to the RNase H family. As to quaternary structure, monomer. Requires Mg(2+) as cofactor.

The protein localises to the cytoplasm. It carries out the reaction Endonucleolytic cleavage to 5'-phosphomonoester.. Functionally, endonuclease that specifically degrades the RNA of RNA-DNA hybrids. This chain is Ribonuclease H, found in Proteus mirabilis (strain HI4320).